The chain runs to 642 residues: Threonine--tRNA ligase (642 aa).

The region spanning 1–61 (MPVITLPDGS…ESDAQLAIIT (61 aa)) is the TGS domain. The catalytic stretch occupies residues 243–534 (DHRKIGKQLD…LTEEYAGFFP (292 aa)). Zn(2+) contacts are provided by C334, H385, and H511.

It belongs to the class-II aminoacyl-tRNA synthetase family. Homodimer. Requires Zn(2+) as cofactor.

It localises to the cytoplasm. It catalyses the reaction tRNA(Thr) + L-threonine + ATP = L-threonyl-tRNA(Thr) + AMP + diphosphate + H(+). Its function is as follows. Catalyzes the attachment of threonine to tRNA(Thr) in a two-step reaction: L-threonine is first activated by ATP to form Thr-AMP and then transferred to the acceptor end of tRNA(Thr). Also edits incorrectly charged L-seryl-tRNA(Thr). The polypeptide is Threonine--tRNA ligase (Yersinia enterocolitica serotype O:8 / biotype 1B (strain NCTC 13174 / 8081)).